Here is a 227-residue protein sequence, read N- to C-terminus: Ashwin (227 aa).

The span at 71 to 84 shows a compositional bias: basic and acidic residues; the sequence is LPRSRWGKRMEKSR. Residues 71 to 227 are disordered; that stretch reads LPRSRWGKRM…KKKIQHITWP (157 aa). Over residues 88 to 98 the composition is skewed to low complexity; it reads SSSSTHSSSTD. Residues 153–173 show a composition bias toward polar residues; the sequence is GASTNCSSSNFSNRTPVSSSG. A compositionally biased stretch (low complexity) spans 178–191; sequence SPSNHSNSSVHSNN. Over residues 204–219 the composition is skewed to basic and acidic residues; that stretch reads GEPDTAKDIKSPETKK.

It belongs to the ashwin family.

Its subcellular location is the nucleus. This chain is Ashwin, found in Danio rerio (Zebrafish).